Here is a 332-residue protein sequence, read N- to C-terminus: MSTEIPSLSASYANSFKIGAAVHTRMLQTEGEFIAKHYNSVTAENQMKFEEVHPREHEYTFEAADEIVDFAVARGIGVRGHTLVWHNQTPAWMFEDASGGTASREMMLSRLKQHIDTVVGRYKDQIYAWDVVNEAIEDKTDLIMRDTKWLRLLGEDYLVQAFNMAHEADPNALLFYNDYNETDPVKREKIYNLVRSLLDQGAPVHGIGMQGHWNIHGPSMDEIRQAIERYASLDVQLHVTELDLSVFRHEDQRTDLTEPTAEMAELQQKRYEDIFGLFREYRSNITSVTFWGVADNYTWLDNFPVRGRKNWPFVFDTELQPKDSFWRIIGQD.

Residues 2–331 (STEIPSLSAS…KDSFWRIIGQ (330 aa)) form the GH10 domain. The Proton donor role is filled by Glu134. Glu241 acts as the Nucleophile in catalysis.

The protein belongs to the glycosyl hydrolase 10 (cellulase F) family. Cytoplasmic xylanase subfamily.

The protein localises to the cytoplasm. The catalysed reaction is Endohydrolysis of (1-&gt;4)-beta-D-xylosidic linkages in xylans.. Its pathway is glycan degradation; xylan degradation. Its activity is regulated as follows. Completely inhibited by Ag(2+), Cu(2+), Hg(2+), Mn(2+), Pb(2+) and Sn(2+). Strongly inhibited by Fe(2+) and Zn(2+). Co(2+) and Ni(2+) cause little inhibition while Ca(2+) and Mg(2+) do not affect enzyme activity, and Ba(2+) produces a small stimulating effect. Irreversibly inactivated by SDS in vitro. Functionally, plays a role in plant xylan biodegradation, probably via the hydrolysis of short xylooligosaccharides resulting from extracellular xylan hydrolysis, once they have been transported inside cells. Shows similar activity on xylans of different rate of arabinose or methylglucuronic substitution. Also displays high activity on aryl-xylosides. Is active on xylotetraose and xylotriose, but does not hydrolyze xylobiose, indicating that XynB is a xylanase and not a beta-xylosidase. This is Endo-1,4-beta-xylanase B (xynB) from Paenibacillus barcinonensis.